The following is a 195-amino-acid chain: Phosphoribosylglycinamide formyltransferase (195 aa).

Residue glycine 12–asparagine 14 coordinates N(1)-(5-phospho-beta-D-ribosyl)glycinamide. Residues lysine 65, methionine 90–isoleucine 93, and asparagine 107 each bind (6R)-10-formyltetrahydrofolate. The Proton donor role is filled by histidine 109.

The protein belongs to the GART family.

It carries out the reaction N(1)-(5-phospho-beta-D-ribosyl)glycinamide + (6R)-10-formyltetrahydrofolate = N(2)-formyl-N(1)-(5-phospho-beta-D-ribosyl)glycinamide + (6S)-5,6,7,8-tetrahydrofolate + H(+). The protein operates within purine metabolism; IMP biosynthesis via de novo pathway; N(2)-formyl-N(1)-(5-phospho-D-ribosyl)glycinamide from N(1)-(5-phospho-D-ribosyl)glycinamide (10-formyl THF route): step 1/1. Catalyzes the transfer of a formyl group from 10-formyltetrahydrofolate to 5-phospho-ribosyl-glycinamide (GAR), producing 5-phospho-ribosyl-N-formylglycinamide (FGAR) and tetrahydrofolate. The polypeptide is Phosphoribosylglycinamide formyltransferase (Bacillus subtilis (strain 168)).